The following is a 536-amino-acid chain: MNSHASNGRSRNWPHALLESALLTSALLMASSVALANAPAVPEAPKALVKELHQAKTYTITSPPTGPLEMAKPVLPDLSGYTTEAALKKIARNKPGKITVARMMEETGLKEFIGGDNKMAEWVVRQKGIPQAIMISDGYVNLQDLVKKVPKQFLSEVSPGVYVARLPILVKETGIFEIDSKTKELRLSQEKGSFIVSEGKMLITNTSVNAWSETRNGLAAYRTPDEFRPFVLTWGGSQTWIAKTKMASMGYNQSKSYGVSISQYTPNTAKVLKRGEPTGWIIDSEFADMWYGFYCYETRDFVVKGNTYRDNIVYGIDPHDRSHGLIIAENDVYGTKKKHGIIISREVDNSFIFRNKSHNNKLSGVVLDRNSVGNIVAYNEIYQNHTDGITLYESGNNLLWGNRVIANRRHGIRVRNSVNIKLYENVAMANGLMGVYGHIKDLNDTDRDIELDPFDAQVSLIMVGGELSSNGSGPLSIDSPLSVELYRVSMLMPTKEVGISLNGILGERQDEILDLLVRQKKAVLIDPVESQTELRE.

The first 36 residues, 1–36, serve as a signal peptide directing secretion; the sequence is MNSHASNGRSRNWPHALLESALLTSALLMASSVALA. PbH1 repeat units follow at residues 298 to 320, 322 to 345, 347 to 369, 371 to 393, and 394 to 416; these read TRDF…DPHD, SHGL…IISR, VDNS…VLDR, SVGN…TLYE, and SGNN…RVRN. The active-site Proton acceptor is His-319.

It belongs to the D-mannuronate C5-epimerase family.

Its subcellular location is the periplasm. It catalyses the reaction [(1-&gt;4)-beta-D-mannuronosyl](n) = [alginate](n). The protein operates within glycan biosynthesis; alginate biosynthesis. Functionally, catalyzes the epimerization of beta-D-mannuronate to alpha-L-guluronate during the synthesis of the linear polysaccharide alginate. In addition, is part of a periplasmic protein complex that protects alginate from degradation by AlgL by channeling the newly formed alginate polymer through a scaffold that transfers the alginate polymer through the periplasmic space to the outer membrane secretin AlgE. In Pseudomonas syringae pv. tomato (strain ATCC BAA-871 / DC3000), this protein is Mannuronan C5-epimerase (algG).